Reading from the N-terminus, the 1058-residue chain is Carbamoyl phosphate synthase large chain (1058 aa).

Residues 1-401 (MAKRTDIKKI…CLLKACRSLE (401 aa)) form a carboxyphosphate synthetic domain region. ATP is bound by residues arginine 129, arginine 169, glycine 175, glycine 176, arginine 208, isoleucine 210, glutamate 215, glycine 241, isoleucine 242, histidine 243, glutamine 284, and glutamate 298. In terms of domain architecture, ATP-grasp 1 spans 133-327 (KQLMKELGEP…IAKIAAKIAV (195 aa)). Mg(2+)-binding residues include glutamine 284, glutamate 298, and asparagine 300. Residues glutamine 284, glutamate 298, and asparagine 300 each coordinate Mn(2+). Residues 402 to 546 (IGVHHNELKG…YSTYEWENES (145 aa)) are oligomerization domain. Residues 547-929 (IKSEKESVIV…ALYKAFEASY (383 aa)) form a carbamoyl phosphate synthetic domain region. The 191-residue stretch at 671-861 (EKALKELGIP…MAQVATKLIL (191 aa)) folds into the ATP-grasp 2 domain. Positions 707, 746, 748, 752, 777, 778, 779, 780, 820, and 832 each coordinate ATP. The Mg(2+) site is built by glutamine 820, glutamate 832, and asparagine 834. Mn(2+)-binding residues include glutamine 820, glutamate 832, and asparagine 834. In terms of domain architecture, MGS-like spans 930–1058 (LHMPEYGTIV…ESRTFSIEAI (129 aa)). Residues 930 to 1058 (LHMPEYGTIV…ESRTFSIEAI (129 aa)) form an allosteric domain region.

It belongs to the CarB family. Composed of two chains; the small (or glutamine) chain promotes the hydrolysis of glutamine to ammonia, which is used by the large (or ammonia) chain to synthesize carbamoyl phosphate. Tetramer of heterodimers (alpha,beta)4. Mg(2+) serves as cofactor. Requires Mn(2+) as cofactor.

The enzyme catalyses hydrogencarbonate + L-glutamine + 2 ATP + H2O = carbamoyl phosphate + L-glutamate + 2 ADP + phosphate + 2 H(+). It carries out the reaction hydrogencarbonate + NH4(+) + 2 ATP = carbamoyl phosphate + 2 ADP + phosphate + 2 H(+). It functions in the pathway amino-acid biosynthesis; L-arginine biosynthesis; carbamoyl phosphate from bicarbonate: step 1/1. It participates in pyrimidine metabolism; UMP biosynthesis via de novo pathway; (S)-dihydroorotate from bicarbonate: step 1/3. Its function is as follows. Large subunit of the glutamine-dependent carbamoyl phosphate synthetase (CPSase). CPSase catalyzes the formation of carbamoyl phosphate from the ammonia moiety of glutamine, carbonate, and phosphate donated by ATP, constituting the first step of 2 biosynthetic pathways, one leading to arginine and/or urea and the other to pyrimidine nucleotides. The large subunit (synthetase) binds the substrates ammonia (free or transferred from glutamine from the small subunit), hydrogencarbonate and ATP and carries out an ATP-coupled ligase reaction, activating hydrogencarbonate by forming carboxy phosphate which reacts with ammonia to form carbamoyl phosphate. This chain is Carbamoyl phosphate synthase large chain, found in Streptococcus equi subsp. equi (strain 4047).